Consider the following 482-residue polypeptide: Signal recognition particle protein (482 aa).

GTP contacts are provided by residues 107 to 114 (GLQGTGKT), 189 to 193 (DTAGR), and 247 to 250 (TKLD). 2 disordered regions span residues 380 to 413 (MTTE…TDVS) and 452 to 482 (FGGQ…FGQL). Gly residues predominate over residues 452-468 (FGGQPGPGFRGYRGGGG). Residues 469–482 (KPKKKKKKKGFGQL) are compositionally biased toward basic residues.

This sequence belongs to the GTP-binding SRP family. SRP54 subfamily. In terms of assembly, part of the signal recognition particle protein translocation system, which is composed of SRP and FtsY.

It is found in the cytoplasm. It carries out the reaction GTP + H2O = GDP + phosphate + H(+). Functionally, involved in targeting and insertion of nascent membrane proteins into the cytoplasmic membrane. Binds to the hydrophobic signal sequence of the ribosome-nascent chain (RNC) as it emerges from the ribosomes. The SRP-RNC complex is then targeted to the cytoplasmic membrane where it interacts with the SRP receptor FtsY. In Synechocystis sp. (strain ATCC 27184 / PCC 6803 / Kazusa), this protein is Signal recognition particle protein.